A 213-amino-acid chain; its full sequence is Glutathione S-transferase (213 aa).

The GST N-terminal domain occupies 4–81 (AKPILYGAWI…YLEDKYPQHP (78 aa)). The 126-residue stretch at 86-211 (DIKTKGLDLQ…LPQNQPDAPS (126 aa)) folds into the GST C-terminal domain.

Belongs to the GST superfamily. Zeta family.

Its subcellular location is the cytoplasm. It catalyses the reaction RX + glutathione = an S-substituted glutathione + a halide anion + H(+). Functionally, has a glutathione transferase activity with ethacrynic acid and nitrophenyl acetate. Has low glutathione peroxidase activity with cumene hydroperoxide. The polypeptide is Glutathione S-transferase (GSTZ1) (Triticum aestivum (Wheat)).